The sequence spans 227 residues: Paired immunoglobulin-like type 2 receptor beta (227 aa).

Residues 1-19 (MGRPLLLPLLLLLQPPAFL) form the signal peptide. Over 20–191 (QPGGSTGSGP…WHLSLDTAIR (172 aa)) the chain is Extracellular. The Ig-like V-type domain maps to 21 to 143 (PGGSTGSGPS…SGRQQLQSIK (123 aa)). N100 carries an N-linked (GlcNAc...) asparagine glycan. A helical membrane pass occupies residues 192–212 (VALAVAVLKTVILGLLCLLLL). Residues 213 to 227 (WWRRRKGSRAPSSDF) lie on the Cytoplasmic side of the membrane.

Its subcellular location is the membrane. Functionally, paired receptors consist of highly related activating and inhibitory receptors and are widely involved in the regulation of the immune system. PILRB is thought to act as a cellular signaling activating receptor that associates with ITAM-bearing adapter molecules on the cell surface. The chain is Paired immunoglobulin-like type 2 receptor beta (PILRB) from Homo sapiens (Human).